The primary structure comprises 568 residues: Dihydroxy-acid dehydratase 1 (568 aa).

The tract at residues 1 to 22 (MAEQTNTPDLKPRSRDVTDGLE) is disordered. The span at 10 to 22 (LKPRSRDVTDGLE) shows a compositional bias: basic and acidic residues. Residue C57 coordinates [2Fe-2S] cluster. Residue D89 participates in Mg(2+) binding. C130 is a [2Fe-2S] cluster binding site. D131 and K132 together coordinate Mg(2+). K132 is subject to N6-carboxylysine. Position 207 (C207) interacts with [2Fe-2S] cluster. E458 provides a ligand contact to Mg(2+). The Proton acceptor role is filled by S484.

The protein belongs to the IlvD/Edd family. In terms of assembly, homodimer. Requires [2Fe-2S] cluster as cofactor. Mg(2+) is required as a cofactor.

It carries out the reaction (2R)-2,3-dihydroxy-3-methylbutanoate = 3-methyl-2-oxobutanoate + H2O. It catalyses the reaction (2R,3R)-2,3-dihydroxy-3-methylpentanoate = (S)-3-methyl-2-oxopentanoate + H2O. Its pathway is amino-acid biosynthesis; L-isoleucine biosynthesis; L-isoleucine from 2-oxobutanoate: step 3/4. The protein operates within amino-acid biosynthesis; L-valine biosynthesis; L-valine from pyruvate: step 3/4. Its function is as follows. Functions in the biosynthesis of branched-chain amino acids. Catalyzes the dehydration of (2R,3R)-2,3-dihydroxy-3-methylpentanoate (2,3-dihydroxy-3-methylvalerate) into 2-oxo-3-methylpentanoate (2-oxo-3-methylvalerate) and of (2R)-2,3-dihydroxy-3-methylbutanoate (2,3-dihydroxyisovalerate) into 2-oxo-3-methylbutanoate (2-oxoisovalerate), the penultimate precursor to L-isoleucine and L-valine, respectively. The polypeptide is Dihydroxy-acid dehydratase 1 (Nocardia farcinica (strain IFM 10152)).